Consider the following 367-residue polypeptide: Histidinol-phosphate aminotransferase 1 (367 aa).

The residue at position 226 (Lys226) is an N6-(pyridoxal phosphate)lysine.

It belongs to the class-II pyridoxal-phosphate-dependent aminotransferase family. Histidinol-phosphate aminotransferase subfamily. In terms of assembly, homodimer. It depends on pyridoxal 5'-phosphate as a cofactor.

It catalyses the reaction L-histidinol phosphate + 2-oxoglutarate = 3-(imidazol-4-yl)-2-oxopropyl phosphate + L-glutamate. It functions in the pathway amino-acid biosynthesis; L-histidine biosynthesis; L-histidine from 5-phospho-alpha-D-ribose 1-diphosphate: step 7/9. This is Histidinol-phosphate aminotransferase 1 (hisC1) from Haemophilus influenzae (strain ATCC 51907 / DSM 11121 / KW20 / Rd).